The sequence spans 356 residues: Carbohydrate sulfotransferase 10 (356 aa).

Over 1 to 6 the chain is Cytoplasmic; sequence MHHQWL. A helical; Signal-anchor for type II membrane protein transmembrane segment spans residues 7-27; that stretch reads LLAACFWVIFMFMVASKFITL. The Lumenal portion of the chain corresponds to 28–356; it reads TFKDPDVYSA…GYQKPDFLLN (329 aa). An N-linked (GlcNAc...) asparagine glycan is attached at asparagine 99. 3'-phosphoadenylyl sulfate is bound by residues 127–133 and 189–197; these read PKVGNTQ and RDPFERLIS. N-linked (GlcNAc...) asparagine glycans are attached at residues asparagine 228 and asparagine 316.

The protein belongs to the sulfotransferase 2 family.

It localises to the golgi apparatus membrane. It catalyses the reaction 3-O-{beta-D-GlcA-(1-&gt;[3)-alpha-D-Xyl-(1-&gt;3)-beta-D-GlcA-(1-&gt;](n)-4)-beta-D-Xyl-(1-&gt;4)-Rib-ol-P-Rib-ol-P-3-beta-D-GalNAc-(1-&gt;3)-beta-D-GlcNAc-(1-&gt;4)-O-6-P-alpha-D-Man}-L-Thr-[protein] + 3'-phosphoadenylyl sulfate = 3-O-{O-3-S-beta-D-GlcA-(1-&gt;[3)-alpha-D-Xyl-(1-&gt;3)-beta-D-GlcA-(1-&gt;](n)-4)-beta-D-Xyl-(1-&gt;4)-Rib-ol-P-Rib-ol-P-3-beta-D-GalNAc-(1-&gt;3)-beta-D-GlcNAc-(1-&gt;4)-O-6-P-alpha-D-Man}-L-Thr-[protein] + adenosine 3',5'-bisphosphate + H(+). The catalysed reaction is 17beta-estradiol 3-O-(beta-D-glucuronate) + 3'-phosphoadenylyl sulfate = 17beta-estradiol 3-O-(3-sulfo-beta-D-glucuronate) + adenosine 3',5'-bisphosphate + H(+). The enzyme catalyses 17beta-estradiol 3-O-(beta-D-glucuronate) 17-sulfate + 3'-phosphoadenylyl sulfate = 17beta-estradiol 3-O-(3-sulfo-beta-D-glucuronate) 17-sulfate + adenosine 3',5'-bisphosphate + H(+). It carries out the reaction 17beta-estradiol 17-O-(beta-D-glucuronate) + 3'-phosphoadenylyl sulfate = 17beta-estradiol 17-O-(3-sulfo-beta-D-glucuronate) + adenosine 3',5'-bisphosphate + H(+). It catalyses the reaction 16alpha,17beta-estriol 3-O-(beta-D-glucuronate) + 3'-phosphoadenylyl sulfate = 16alpha,17beta-estriol 3-O-(3-sulfo-beta-D-glucuronate) + adenosine 3',5'-bisphosphate + H(+). The catalysed reaction is 16alpha,17beta-estriol 16-O-(beta-D-glucuronate) + 3'-phosphoadenylyl sulfate = 16alpha,17beta-estriol 16-O-(3-sulfo-beta-D-glucuronate) + adenosine 3',5'-bisphosphate + H(+). The enzyme catalyses 16alpha,17beta-estriol 17-O-(beta-D-glucuronate) + 3'-phosphoadenylyl sulfate = 16alpha,17beta-estriol 17-O-(3-sulfo-beta-D-glucuronate) + adenosine 3',5'-bisphosphate + H(+). It carries out the reaction estrone 3-O-(beta-D-glucuronate) + 3'-phosphoadenylyl sulfate = estrone 3-O-(3-sulfo-beta-D-glucuronate) + adenosine 3',5'-bisphosphate + H(+). It catalyses the reaction 3alpha,20alpha-dihydroxy-5beta-pregnane 3-O-(beta-D-glucuronate) + 3'-phosphoadenylyl sulfate = 3alpha,20alpha-dihydroxy-5beta-pregnane 3-O-(3-sulfo-beta-D-glucuronate) + adenosine 3',5'-bisphosphate + H(+). The catalysed reaction is testosterone 17-O-(beta-D-glucuronate) + 3'-phosphoadenylyl sulfate = testosterone 17-O-(3-sulfo-beta-D-glucuronate) + adenosine 3',5'-bisphosphate + H(+). The enzyme catalyses 3beta-androst-5-en-17-one 3-O-(beta-D-glucuronate) + 3'-phosphoadenylyl sulfate = 3beta-androst-5-en-17-one 3-O-(3-sulfo-beta-D-glucuronate) + adenosine 3',5'-bisphosphate + H(+). It carries out the reaction 3alpha,17alpha-dihydroxy-5beta-androstane-11-one-17beta-carboxylate 3-O-(beta-D-glucuronate) + 3'-phosphoadenylyl sulfate = 3alpha,17alpha-dihydroxy-5beta-androstane-11-one-17beta-carboxylate 3-O-(3-sulfo-beta-D-glucuronate) + adenosine 3',5'-bisphosphate + H(+). It catalyses the reaction 3alpha-hydroxyetiocholan-17-one 3-O-(beta-D-glucuronate) + 3'-phosphoadenylyl sulfate = 3alpha-hydroxyetiocholan-17-one 3-O-(3-sulfo-beta-D-glucuronate) + adenosine 3',5'-bisphosphate + H(+). It functions in the pathway steroid metabolism. Its pathway is protein modification; carbohydrate sulfation. Its function is as follows. Catalyzes the transfer of sulfate from 3'-phosphoadenylyl sulfate (PAPS) to position 3 of terminal glucuronic acid of both protein- and lipid-linked oligosaccharides. Participates in biosynthesis of HNK-1 carbohydrate structure 3-O-sulfo-beta-D-GlcA-(1-&gt;3)-beta-D-Gal-(1-&gt;4)-D-GlcNAc-R, a sulfated glucuronyl-lactosaminyl residue carried by many neural recognition molecules, which is involved in cell interactions during ontogenetic development and in synaptic plasticity in the adult. May be indirectly involved in synapse plasticity of the hippocampus, via its role in HNK-1 biosynthesis. Sulfates terminal glucuronyl residue of the laminin globular (LG)-domain binding epitope on DAG1/alpha-dystroglycan and prevents further polymerization by LARGE1 glycosyltransferase. Likely defines the chain length of LG epitope, conferring binding specificity to extracellular matrix components. Plays a role in down-regulating the steroid hormones. Sulfates glucuronidated estrogens and androgens with an impact in hormone cycle and fertility. Has a preference for glucuronyl moiety at the 3-hydroxyl group of a sterol ring rather than the 17-hydroxyl group, showing high catalytic efficiency for 17beta-estradiol 3-O-(beta-D-glucuronate) and dehydroepiandrosterone 3-O-(beta-D-glucuronate) hormones. The polypeptide is Carbohydrate sulfotransferase 10 (CHST10) (Pongo abelii (Sumatran orangutan)).